Here is a 60-residue protein sequence, read N- to C-terminus: UPF0337 protein SACOL1680 (60 aa).

The protein belongs to the UPF0337 (CsbD) family.

The sequence is that of UPF0337 protein SACOL1680 from Staphylococcus aureus (strain COL).